Consider the following 262-residue polypeptide: tRNA pseudouridine synthase A (262 aa).

Asp51 (nucleophile) is an active-site residue. Tyr106 contributes to the substrate binding site.

The protein belongs to the tRNA pseudouridine synthase TruA family.

It carries out the reaction uridine(38/39/40) in tRNA = pseudouridine(38/39/40) in tRNA. Its function is as follows. Formation of pseudouridine at positions 38, 39 and 40 in the anticodon stem and loop of transfer RNAs. In Pyrococcus horikoshii (strain ATCC 700860 / DSM 12428 / JCM 9974 / NBRC 100139 / OT-3), this protein is tRNA pseudouridine synthase A.